The chain runs to 139 residues: D-ribose pyranase (139 aa).

His-20 functions as the Proton donor in the catalytic mechanism. Substrate-binding positions include Asp-28, His-106, and 128-130; that span reads YAN.

It belongs to the RbsD / FucU family. RbsD subfamily. Homodecamer.

The protein localises to the cytoplasm. It carries out the reaction beta-D-ribopyranose = beta-D-ribofuranose. The protein operates within carbohydrate metabolism; D-ribose degradation; D-ribose 5-phosphate from beta-D-ribopyranose: step 1/2. In terms of biological role, catalyzes the interconversion of beta-pyran and beta-furan forms of D-ribose. The polypeptide is D-ribose pyranase (Escherichia coli O81 (strain ED1a)).